A 241-amino-acid chain; its full sequence is Leucyl/phenylalanyl-tRNA--protein transferase (241 aa).

This sequence belongs to the L/F-transferase family.

The protein resides in the cytoplasm. It carries out the reaction N-terminal L-lysyl-[protein] + L-leucyl-tRNA(Leu) = N-terminal L-leucyl-L-lysyl-[protein] + tRNA(Leu) + H(+). The catalysed reaction is N-terminal L-arginyl-[protein] + L-leucyl-tRNA(Leu) = N-terminal L-leucyl-L-arginyl-[protein] + tRNA(Leu) + H(+). It catalyses the reaction L-phenylalanyl-tRNA(Phe) + an N-terminal L-alpha-aminoacyl-[protein] = an N-terminal L-phenylalanyl-L-alpha-aminoacyl-[protein] + tRNA(Phe). Its function is as follows. Functions in the N-end rule pathway of protein degradation where it conjugates Leu, Phe and, less efficiently, Met from aminoacyl-tRNAs to the N-termini of proteins containing an N-terminal arginine or lysine. This chain is Leucyl/phenylalanyl-tRNA--protein transferase, found in Colwellia psychrerythraea (strain 34H / ATCC BAA-681) (Vibrio psychroerythus).